The primary structure comprises 143 residues: Transcription antitermination protein NusB (143 aa).

Belongs to the NusB family.

Its function is as follows. Involved in transcription antitermination. Required for transcription of ribosomal RNA (rRNA) genes. Binds specifically to the boxA antiterminator sequence of the ribosomal RNA (rrn) operons. The protein is Transcription antitermination protein NusB of Desulfatibacillum aliphaticivorans.